The following is a 308-amino-acid chain: Tyrosine recombinase XerD (308 aa).

The Core-binding (CB) domain occupies 13-97 (PSSTEAIQRF…VFKRFFQWAL (85 aa)). In terms of domain architecture, Tyr recombinase spans 118–302 (RVPKTLSEAQ…ARERLRTLHA (185 aa)). Residues Arg158, Lys183, His254, Arg257, and His280 contribute to the active site. The active-site O-(3'-phospho-DNA)-tyrosine intermediate is the Tyr289.

It belongs to the 'phage' integrase family. XerD subfamily. As to quaternary structure, forms a cyclic heterotetrameric complex composed of two molecules of XerC and two molecules of XerD.

It localises to the cytoplasm. Site-specific tyrosine recombinase, which acts by catalyzing the cutting and rejoining of the recombining DNA molecules. The XerC-XerD complex is essential to convert dimers of the bacterial chromosome into monomers to permit their segregation at cell division. It also contributes to the segregational stability of plasmids. This Ralstonia nicotianae (strain ATCC BAA-1114 / GMI1000) (Ralstonia solanacearum) protein is Tyrosine recombinase XerD.